Here is a 144-residue protein sequence, read N- to C-terminus: Large ribosomal subunit protein uL15 (144 aa).

A disordered region spans residues 1 to 53 (MRLNTLSPAVGAKSAPKRVGRGIGSGLGKTAGRGHKGQKSRSGGGVRPGFEGG). 2 stretches are compositionally biased toward gly residues: residues 21–31 (RGIGSGLGKTA) and 42–52 (SGGGVRPGFEG).

It belongs to the universal ribosomal protein uL15 family. In terms of assembly, part of the 50S ribosomal subunit.

Its function is as follows. Binds to the 23S rRNA. The polypeptide is Large ribosomal subunit protein uL15 (Shewanella amazonensis (strain ATCC BAA-1098 / SB2B)).